Reading from the N-terminus, the 207-residue chain is Protein THEM6 (207 aa).

An N-terminal signal peptide occupies residues 1-21 (MLELLVASLSLALAFFALLDG). N-linked (GlcNAc...) asparagine glycosylation is present at N188. At S199 the chain carries Phosphoserine.

The protein belongs to the THEM6 family.

The protein resides in the secreted. This is Protein THEM6 (Them6) from Mus musculus (Mouse).